The chain runs to 149 residues: Transcriptional repressor NrdR (149 aa).

A zinc finger spans residues 3-34 (CPFCAAVDTKVIDSRLVGDGSQVRRRRQCLVC). The ATP-cone domain occupies 49 to 139 (PRVIKSDEVR…VYRSFEDIRE (91 aa)).

It belongs to the NrdR family. Requires Zn(2+) as cofactor.

Negatively regulates transcription of bacterial ribonucleotide reductase nrd genes and operons by binding to NrdR-boxes. The protein is Transcriptional repressor NrdR of Serratia proteamaculans (strain 568).